The primary structure comprises 424 residues: CinA-like protein (424 aa).

The protein belongs to the CinA family.

This chain is CinA-like protein, found in Shewanella baltica (strain OS155 / ATCC BAA-1091).